A 605-amino-acid polypeptide reads, in one-letter code: Pyruvate decarboxylase 2 (605 aa).

The substrate site is built by D68 and H155. Residues 433-515 are thiamine pyrophosphate binding; sequence DSWFNCQKLK…FLINNGGYTI (83 aa). 3 residues coordinate Mg(2+): D483, N510, and G512. E516 is a substrate binding site.

This sequence belongs to the TPP enzyme family. As to quaternary structure, homotetramer. A metal cation is required as a cofactor. Thiamine diphosphate serves as cofactor.

The enzyme catalyses a 2-oxocarboxylate + H(+) = an aldehyde + CO2. This chain is Pyruvate decarboxylase 2 (PDC2), found in Oryza sativa subsp. japonica (Rice).